We begin with the raw amino-acid sequence, 85 residues long: Conotoxin Im28.1 (85 aa).

Positions 1-21 (MPKLEMMLLVLLILPLCYIDA) are cleaved as a signal peptide. Positions 22 to 40 (VGPPPPWNMEDEIIEHWQK) are excised as a propeptide.

Belongs to the conotoxin D superfamily. In terms of processing, contains 5 disulfide bonds. Expressed by the venom duct.

It is found in the secreted. Functionally, probable neurotoxin. The polypeptide is Conotoxin Im28.1 (Conus imperialis (Imperial cone)).